The following is a 104-amino-acid chain: Nucleoid-associated protein Amuc_1227 (104 aa).

The protein belongs to the YbaB/EbfC family. Homodimer.

The protein resides in the cytoplasm. It is found in the nucleoid. Its function is as follows. Binds to DNA and alters its conformation. May be involved in regulation of gene expression, nucleoid organization and DNA protection. The polypeptide is Nucleoid-associated protein Amuc_1227 (Akkermansia muciniphila (strain ATCC BAA-835 / DSM 22959 / JCM 33894 / BCRC 81048 / CCUG 64013 / CIP 107961 / Muc)).